We begin with the raw amino-acid sequence, 123 residues long: Large ribosomal subunit protein uL14 (123 aa).

This sequence belongs to the universal ribosomal protein uL14 family. In terms of assembly, part of the 50S ribosomal subunit. Forms a cluster with proteins L3 and L19. In the 70S ribosome, L14 and L19 interact and together make contacts with the 16S rRNA in bridges B5 and B8.

Its function is as follows. Binds to 23S rRNA. Forms part of two intersubunit bridges in the 70S ribosome. The sequence is that of Large ribosomal subunit protein uL14 from Escherichia coli O6:K15:H31 (strain 536 / UPEC).